We begin with the raw amino-acid sequence, 296 residues long: ATP synthase gamma chain (296 aa).

Belongs to the ATPase gamma chain family. In terms of assembly, F-type ATPases have 2 components, CF(1) - the catalytic core - and CF(0) - the membrane proton channel. CF(1) has five subunits: alpha(3), beta(3), gamma(1), delta(1), epsilon(1). CF(0) has three main subunits: a, b and c.

It is found in the cell inner membrane. Functionally, produces ATP from ADP in the presence of a proton gradient across the membrane. The gamma chain is believed to be important in regulating ATPase activity and the flow of protons through the CF(0) complex. The polypeptide is ATP synthase gamma chain (Rhodopirellula baltica (strain DSM 10527 / NCIMB 13988 / SH1)).